The following is a 245-amino-acid chain: 2,3-bisphosphoglycerate-dependent phosphoglycerate mutase (245 aa).

Substrate-binding positions include 8–15, 21–22, arginine 60, 87–90, lysine 98, 114–115, and 183–184; these read RHGQSLWN, TG, ERHY, RR, and GN. Residue histidine 9 is the Tele-phosphohistidine intermediate of the active site. Glutamate 87 serves as the catalytic Proton donor/acceptor.

The protein belongs to the phosphoglycerate mutase family. BPG-dependent PGAM subfamily.

The catalysed reaction is (2R)-2-phosphoglycerate = (2R)-3-phosphoglycerate. It functions in the pathway carbohydrate degradation; glycolysis; pyruvate from D-glyceraldehyde 3-phosphate: step 3/5. Its function is as follows. Catalyzes the interconversion of 2-phosphoglycerate and 3-phosphoglycerate. In Bacillus thuringiensis subsp. konkukian (strain 97-27), this protein is 2,3-bisphosphoglycerate-dependent phosphoglycerate mutase.